A 525-amino-acid chain; its full sequence is EGF domain-specific O-linked N-acetylglucosamine transferase (525 aa).

The first 24 residues, 1–24, serve as a signal peptide directing secretion; sequence MVPLRLVLLLHIIHFSCENEVGSA. The Required for optimal activity signature appears at 293-295; the sequence is DYE. N-linked (GlcNAc...) asparagine glycosylation occurs at asparagine 352. The short motif at 522–525 is the Prevents secretion from ER element; that stretch reads RDEL.

It belongs to the glycosyltransferase 61 family.

The protein resides in the endoplasmic reticulum lumen. The enzyme catalyses L-seryl-[protein] + UDP-N-acetyl-alpha-D-glucosamine = 3-O-(N-acetyl-beta-D-glucosaminyl)-L-seryl-[protein] + UDP + H(+). It carries out the reaction L-threonyl-[protein] + UDP-N-acetyl-alpha-D-glucosamine = 3-O-(N-acetyl-beta-D-glucosaminyl)-L-threonyl-[protein] + UDP + H(+). In terms of biological role, catalyzes the transfer of a single N-acetylglucosamine from UDP-GlcNAc to a serine or threonine residue in extracellular proteins resulting in their modification with a beta-linked N-acetylglucosamine (O-GlcNAc). Specifically glycosylates the Thr residue located between the fifth and sixth conserved cysteines of folded EGF-like domains. The sequence is that of EGF domain-specific O-linked N-acetylglucosamine transferase (eogt) from Xenopus laevis (African clawed frog).